The sequence spans 266 residues: Histidinol-phosphatase (266 aa).

The Mg(2+) site is built by E69, D84, I86, and D87. E69 lines the substrate pocket. Substrate-binding positions include 86–89 (IDGT), R190, and D218. Residue D218 coordinates Mg(2+).

This sequence belongs to the inositol monophosphatase superfamily. Mg(2+) is required as a cofactor.

It catalyses the reaction L-histidinol phosphate + H2O = L-histidinol + phosphate. It participates in amino-acid biosynthesis; L-histidine biosynthesis; L-histidine from 5-phospho-alpha-D-ribose 1-diphosphate: step 8/9. In terms of biological role, catalyzes the dephosphorylation of histidinol-phosphate to histidinol, the direct precursor of histidine. The chain is Histidinol-phosphatase from Streptomyces coelicolor (strain ATCC BAA-471 / A3(2) / M145).